The chain runs to 366 residues: Histidinol-phosphate aminotransferase (366 aa).

An N6-(pyridoxal phosphate)lysine modification is found at lysine 226.

It belongs to the class-II pyridoxal-phosphate-dependent aminotransferase family. Histidinol-phosphate aminotransferase subfamily. Requires pyridoxal 5'-phosphate as cofactor.

It catalyses the reaction L-histidinol phosphate + 2-oxoglutarate = 3-(imidazol-4-yl)-2-oxopropyl phosphate + L-glutamate. Its pathway is amino-acid biosynthesis; L-histidine biosynthesis; L-histidine from 5-phospho-alpha-D-ribose 1-diphosphate: step 7/9. This is Histidinol-phosphate aminotransferase from Methanosarcina barkeri (strain Fusaro / DSM 804).